The primary structure comprises 359 residues: Glyceraldehyde-3-phosphate dehydrogenase, glycosomal (359 aa).

NAD(+) contacts are provided by residues Arg-12 to Ile-13, Asp-38, Gln-91, and Ser-134. Residues Ser-165–Thr-167, Thr-197, Thr-226–Gly-227, and Arg-249 each bind D-glyceraldehyde 3-phosphate. The active-site Nucleophile is Cys-166. Asn-335 serves as a coordination point for NAD(+). Positions Ala-357–Leu-359 match the Microbody targeting signal motif.

The protein belongs to the glyceraldehyde-3-phosphate dehydrogenase family. In terms of assembly, homotetramer.

Its subcellular location is the glycosome. The enzyme catalyses D-glyceraldehyde 3-phosphate + phosphate + NAD(+) = (2R)-3-phospho-glyceroyl phosphate + NADH + H(+). It participates in carbohydrate degradation; glycolysis; pyruvate from D-glyceraldehyde 3-phosphate: step 1/5. This is Glyceraldehyde-3-phosphate dehydrogenase, glycosomal from Trypanosoma cruzi.